The sequence spans 299 residues: Pseudouridine-5'-phosphate glycosidase (299 aa).

Residue Glu23 is the Proton donor of the active site. Substrate-binding residues include Lys84 and Val104. A Mn(2+)-binding site is contributed by Asp136. 138–140 (SAD) serves as a coordination point for substrate. Lys157 serves as the catalytic Nucleophile.

The protein belongs to the pseudouridine-5'-phosphate glycosidase family. As to quaternary structure, homotrimer. Requires Mn(2+) as cofactor.

The enzyme catalyses D-ribose 5-phosphate + uracil = psi-UMP + H2O. Catalyzes the reversible cleavage of pseudouridine 5'-phosphate (PsiMP) to ribose 5-phosphate and uracil. Functions biologically in the cleavage direction, as part of a pseudouridine degradation pathway. This is Pseudouridine-5'-phosphate glycosidase from Solibacter usitatus (strain Ellin6076).